The primary structure comprises 155 residues: 6,7-dimethyl-8-ribityllumazine synthase (155 aa).

Residues phenylalanine 24, 58–60 (AFE), and 82–84 (VII) each bind 5-amino-6-(D-ribitylamino)uracil. (2S)-2-hydroxy-3-oxobutyl phosphate is bound at residue 87 to 88 (ST). Histidine 90 acts as the Proton donor in catalysis. Phenylalanine 115 contributes to the 5-amino-6-(D-ribitylamino)uracil binding site. Residue arginine 129 coordinates (2S)-2-hydroxy-3-oxobutyl phosphate.

Belongs to the DMRL synthase family.

It carries out the reaction (2S)-2-hydroxy-3-oxobutyl phosphate + 5-amino-6-(D-ribitylamino)uracil = 6,7-dimethyl-8-(1-D-ribityl)lumazine + phosphate + 2 H2O + H(+). Its pathway is cofactor biosynthesis; riboflavin biosynthesis; riboflavin from 2-hydroxy-3-oxobutyl phosphate and 5-amino-6-(D-ribitylamino)uracil: step 1/2. Catalyzes the formation of 6,7-dimethyl-8-ribityllumazine by condensation of 5-amino-6-(D-ribitylamino)uracil with 3,4-dihydroxy-2-butanone 4-phosphate. This is the penultimate step in the biosynthesis of riboflavin. The protein is 6,7-dimethyl-8-ribityllumazine synthase of Chlorobaculum tepidum (strain ATCC 49652 / DSM 12025 / NBRC 103806 / TLS) (Chlorobium tepidum).